Consider the following 530-residue polypeptide: Chitin synthase 1 (530 aa).

Asn-17 carries N-linked (GlcNAc...) asparagine glycosylation. The segment at 22–94 is disordered; it reads QESSSNLIQQ…QANNNRKVTR (73 aa). The segment covering 24–56 has biased composition (polar residues); the sequence is SSSNLIQQQQPGTNYARNQQTLSSLRSQKQQAE. Asn-118, Asn-310, and Asn-474 each carry an N-linked (GlcNAc...) asparagine glycan. Helical transmembrane passes span 477–497 and 508–528; these read FFAG…GHGF and IYNV…LSFL.

This sequence belongs to the chitin synthase family. Class II subfamily.

Its subcellular location is the cell membrane. The catalysed reaction is [(1-&gt;4)-N-acetyl-beta-D-glucosaminyl](n) + UDP-N-acetyl-alpha-D-glucosamine = [(1-&gt;4)-N-acetyl-beta-D-glucosaminyl](n+1) + UDP + H(+). Polymerizes chitin, a structural polymer of the cell wall and septum, by transferring the sugar moiety of UDP-GlcNAc to the non-reducing end of the growing chitin polymer. This chain is Chitin synthase 1, found in Rhizopus delemar (strain RA 99-880 / ATCC MYA-4621 / FGSC 9543 / NRRL 43880) (Mucormycosis agent).